Here is a 427-residue protein sequence, read N- to C-terminus: Serine protease HTRA2, mitochondrial (427 aa).

A disordered region spans residues 33–55 (HTASSSKGSGGDNSKDKENNGQN). Residues 66-86 (SAFQFCVPFSLGALVSAVLIE) traverse the membrane as a helical segment. Positions 78-81 (ALVS) match the IAP-binding motif. The segment at 144–307 (SNGSGFVIEQ…IPIDYVKVFL (164 aa)) is serine protease. Residues His-162, Asp-194, and Ser-271 each act as charge relay system in the active site. One can recognise a PDZ domain in the interval 330-415 (MGITMLTLTP…DLEIVILRGV (86 aa)).

It belongs to the peptidase S1C family. As to quaternary structure, interacts with th/DIAP1 (via BIR 2 domain).

It localises to the mitochondrion intermembrane space. The protein localises to the mitochondrion membrane. It catalyses the reaction Cleavage of non-polar aliphatic amino-acids at the P1 position, with a preference for Val, Ile and Met. At the P2 and P3 positions, Arg is selected most strongly with a secondary preference for other hydrophilic residues.. Serine protease that shows proteolytic activity against a non-specific substrate beta-casein. Promotes or induces cell death either by direct binding to and inhibition of BIRC proteins (also called inhibitor of apoptosis proteins, IAPs), leading to an increase in caspase activity, or by a BIRC inhibition-independent, caspase-independent and serine protease activity-dependent mechanism. Can antagonize antiapoptotic activity of th/Diap1 by directly inducing the degradation of th/Diap1. In Drosophila pseudoobscura pseudoobscura (Fruit fly), this protein is Serine protease HTRA2, mitochondrial.